A 402-amino-acid chain; its full sequence is Zinc finger protein 809 (402 aa).

The KRAB domain maps to 4-75 (VSFEDVAVDF…AEASSRSLPG (72 aa)). The interval 118 to 139 (QEVSKGTTSRHRRAPVKSLCRK) is disordered. Over residues 125–139 (TSRHRRAPVKSLCRK) the composition is skewed to basic residues. C2H2-type zinc fingers lie at residues 155 to 178 (YECK…RRTH), 184 to 206 (YECD…QKTH), 213 to 235 (YECS…ERTH), 241 to 263 (YECT…KKTH), 269 to 291 (FKCE…QKKH), 297 to 319 (YECT…RIAH), and 325 to 347 (YECK…QKRH).

This sequence belongs to the krueppel C2H2-type zinc-finger protein family.

It is found in the nucleus. In terms of biological role, transcription factor specifically required to repress retrotransposons in embryonic stem cells. Recognizes and binds retroviral DNA sequences from a large subset of mammalian retroviruses and retroelements and repress their expression by recruiting a repressive complex containing TRIM28/KAP1. In Mus musculus (Mouse), this protein is Zinc finger protein 809.